A 141-amino-acid chain; its full sequence is Small ribosomal subunit protein uS8c (141 aa).

This sequence belongs to the universal ribosomal protein uS8 family. As to quaternary structure, part of the 30S ribosomal subunit.

Its subcellular location is the plastid. The protein localises to the chloroplast. Its function is as follows. One of the primary rRNA binding proteins, it binds directly to 16S rRNA central domain where it helps coordinate assembly of the platform of the 30S subunit. The sequence is that of Small ribosomal subunit protein uS8c (rps8) from Chlamydomonas reinhardtii (Chlamydomonas smithii).